A 958-amino-acid polypeptide reads, in one-letter code: MutS protein homolog 4 (958 aa).

Disordered regions lie at residues 51 to 110 and 124 to 161; these read QEAA…SFGN and PVGT…WTPQ. The segment covering 91 to 107 has biased composition (low complexity); it reads SSSSSSSPAPASAPGSS. Composition is skewed to polar residues over residues 124 to 138 and 146 to 161; these read PVGT…TTYP and SAGN…WTPQ. Position 702-709 (702-709) interacts with ATP; that stretch reads GPNMSGKS.

This sequence belongs to the DNA mismatch repair MutS family. In terms of assembly, heterooligomer of MSH4 and MSH5. As to expression, predominantly expressed in testis.

The protein resides in the chromosome. Functionally, involved in meiotic recombination. Required for reciprocal recombination and proper segregation of homologous chromosomes at meiosis. This Mus musculus (Mouse) protein is MutS protein homolog 4 (Msh4).